The primary structure comprises 447 residues: Keratin, type I cytoskeletal 15 (447 aa).

Residues Met-1–Asn-93 form a head region. Ser-16, Ser-28, Ser-33, and Ser-47 each carry phosphoserine. Residues Glu-94–Trp-129 form a coil 1A region. The 313-residue stretch at Glu-94–Met-406 folds into the IF rod domain. At Thr-120 the chain carries Phosphothreonine. Positions Tyr-130–Thr-148 are linker 1. The segment at Met-149–Phe-240 is coil 1B. Residues Ser-241–Leu-260 are linker 12. The coil 2 stretch occupies residues Thr-261–Gln-402. A Glycyl lysine isopeptide (Lys-Gly) (interchain with G-Cter in SUMO2) cross-link involves residue Lys-289. Thr-290 and Thr-312 each carry phosphothreonine. Positions Asp-403–Ser-447 are tail. Residue Lys-438 forms a Glycyl lysine isopeptide (Lys-Gly) (interchain with G-Cter in SUMO1); alternate linkage. Residue Lys-438 forms a Glycyl lysine isopeptide (Lys-Gly) (interchain with G-Cter in SUMO2); alternate linkage.

Belongs to the intermediate filament family. As to quaternary structure, heterotetramer of two type I and two type II keratins. Forms a heterodimer with KRT14. Interacts with NOD2.

In Rattus norvegicus (Rat), this protein is Keratin, type I cytoskeletal 15.